Reading from the N-terminus, the 493-residue chain is WAS/WASL-interacting protein family member 1 (493 aa).

Residues 1 to 14 (MPVPPPPAPPPPPT) are compositionally biased toward pro residues. Residues 1 to 493 (MPVPPPPAPP…GAPPLPPIPR (493 aa)) form a disordered region. Residues 21 to 31 (EKPTLNKTEQA) show a composition bias toward polar residues. A WH2 domain is found at 32–49 (GRNALLSDISKGKKLKKT). Arg33 is modified (asymmetric dimethylarginine). Positions 45-48 (KLKK) are binds actin. Positions 67–105 (ASAGGYGGGGGGGGGGGGGGGGSGGNFGGGGPPGLGGLF) are enriched in gly residues. Arg126 and Arg135 each carry omega-N-methylarginine. 3 stretches are compositionally biased toward pro residues: residues 142–155 (FSPPSGPGRFPAPS), 162–175 (PPEPPRNRMPPPRP), and 183–195 (SLPPPVPNTPRPV). Ser143 carries the post-translational modification Phosphoserine. Ser227 bears the Phosphoserine mark. Pro residues-rich tracts occupy residues 239–248 (FPRPPLPPTP), 274–290 (VPPPPSQTSKPPVPSTP), and 298–315 (APPPPPPPSRPGPPPLPP). A phosphoserine mark is found at Ser330 and Ser340. A compositionally biased stretch (pro residues) spans 336–361 (PPLPSPGRSGPLPPPPSERPPPPVRD). XRSGPXPPXP motif repeat units follow at residues 342-351 (GRSGPLPPPP), 364-373 (GRSGPLPPPP), and 400-409 (PRSGPRPPLP). Residues 403–424 (GPRPPLPPDRPGAGAPPPPPPS) are compositionally biased toward pro residues. Over residues 425-434 (TSVRNGFQDS) the composition is skewed to polar residues. Basic and acidic residues predominate over residues 470-484 (ARNESRSGSNRRERG).

It belongs to the verprolin family. Binds to WAS within the N-terminal region, at a site distinct from the CDC42-binding site. Binds profilin and actin. Binds to WASL. Interacts with DBNL. Interacts with DBNL. Interacts with FNBP1L (via the SH3 domain).

It is found in the cytoplasmic vesicle. It localises to the cytoplasm. Its subcellular location is the cytoskeleton. The protein resides in the cell projection. The protein localises to the ruffle. In terms of biological role, plays a role in the reorganization of the actin cytoskeleton. Contributes with NCK1 and GRB2 in the recruitment and activation of WASL. May participate in regulating the subcellular localization of WASL, resulting in the disassembly of stress fibers in favor of filopodia formation. Plays a role in the formation of cell ruffles. The protein is WAS/WASL-interacting protein family member 1 (Wipf1) of Mus musculus (Mouse).